Consider the following 148-residue polypeptide: Lysozyme C (148 aa).

An N-terminal signal peptide occupies residues 1-18; the sequence is MKALIILGLVLLSVTVQG. Residues 19–148 enclose the C-type lysozyme domain; that stretch reads KIFERCELAR…VSQYVKGCGV (130 aa). Cystine bridges form between Cys-24/Cys-146, Cys-48/Cys-134, Cys-83/Cys-99, and Cys-95/Cys-113. Residues Glu-53 and Asp-71 contribute to the active site.

The protein belongs to the glycosyl hydrolase 22 family. Monomer.

The protein localises to the secreted. The catalysed reaction is Hydrolysis of (1-&gt;4)-beta-linkages between N-acetylmuramic acid and N-acetyl-D-glucosamine residues in a peptidoglycan and between N-acetyl-D-glucosamine residues in chitodextrins.. Its function is as follows. Lysozymes have primarily a bacteriolytic function; those in tissues and body fluids are associated with the monocyte-macrophage system and enhance the activity of immunoagents. The protein is Lysozyme C (LYZ) of Pygathrix nemaeus (Red-shanked douc langur).